The chain runs to 429 residues: Serine--tRNA ligase (429 aa).

L-serine is bound at residue 235 to 237 (TAE). 266-268 (RSE) provides a ligand contact to ATP. Position 289 (E289) interacts with L-serine. 353–356 (EISS) provides a ligand contact to ATP. S389 is an L-serine binding site.

This sequence belongs to the class-II aminoacyl-tRNA synthetase family. Type-1 seryl-tRNA synthetase subfamily. Homodimer. The tRNA molecule binds across the dimer.

It is found in the cytoplasm. It catalyses the reaction tRNA(Ser) + L-serine + ATP = L-seryl-tRNA(Ser) + AMP + diphosphate + H(+). The enzyme catalyses tRNA(Sec) + L-serine + ATP = L-seryl-tRNA(Sec) + AMP + diphosphate + H(+). Its pathway is aminoacyl-tRNA biosynthesis; selenocysteinyl-tRNA(Sec) biosynthesis; L-seryl-tRNA(Sec) from L-serine and tRNA(Sec): step 1/1. In terms of biological role, catalyzes the attachment of serine to tRNA(Ser). Is also able to aminoacylate tRNA(Sec) with serine, to form the misacylated tRNA L-seryl-tRNA(Sec), which will be further converted into selenocysteinyl-tRNA(Sec). The protein is Serine--tRNA ligase of Haemophilus influenzae (strain PittGG).